The chain runs to 186 residues: Transcriptional repressor NrdR (186 aa).

Residues 3–34 (CPFCRHPDSRVVDSREAEEGAAIRRRRSCPAC) fold into a zinc finger. The ATP-cone domain maps to 46 to 136 (LRVRKRSGAT…VYLAFESLGD (91 aa)). The tract at residues 149–169 (AGGGEPPVAGKPTTMPAATGA) is disordered.

Belongs to the NrdR family. Requires Zn(2+) as cofactor.

Functionally, negatively regulates transcription of bacterial ribonucleotide reductase nrd genes and operons by binding to NrdR-boxes. The sequence is that of Transcriptional repressor NrdR from Parafrankia sp. (strain EAN1pec).